A 722-amino-acid chain; its full sequence is Bifunctional UDP-N-acetylglucosamine 2-epimerase/N-acetylmannosamine kinase (722 aa).

Arg-19, Ser-23, Arg-113, His-220, and Asn-253 together coordinate UDP. 4 residues coordinate CMP-N-acetyl-beta-neuraminate: Lys-259, Glu-271, Lys-280, and His-281. UDP is bound by residues Val-282, Ser-301, Ser-302, Glu-307, and Arg-321. Residues 406-722 (TLSALAVDLG…VLDYTTRRIY (317 aa)) form an N-acetylmannosamine kinase region. Asp-413 lines the Mg(2+) pocket. Position 416 (Gly-416) interacts with an N-acyl-D-mannosamine 6-phosphate. ADP is bound by residues Thr-417, Asn-418, and Arg-420. An N-acyl-D-mannosamine 6-phosphate is bound by residues Gly-476, Arg-477, Thr-489, Asn-516, Asp-517, and Gly-545. The an N-acyl-D-mannosamine site is built by Gly-476, Arg-477, Thr-489, Asn-516, and Asp-517. The active site involves Asp-517. 2 residues coordinate an N-acyl-D-mannosamine: Glu-566 and His-569. His-569 lines the an N-acyl-D-mannosamine 6-phosphate pocket. Zn(2+) is bound by residues His-569, Cys-579, Cys-581, and Cys-586. An N-acyl-D-mannosamine 6-phosphate is bound at residue Glu-588. Residue Glu-588 coordinates an N-acyl-D-mannosamine.

The protein in the N-terminal section; belongs to the UDP-N-acetylglucosamine 2-epimerase family. It in the C-terminal section; belongs to the ROK (NagC/XylR) family. As to quaternary structure, homodimer. Homotetramer. Homohexamer. The hexameric form exhibits both enzyme activities, whereas the dimeric form only catalyzes the phosphorylation of N-acyl-D-mannosamine. Phosphorylated. Phosphorylation by PKC activates the UDP-N-acetylglucosamine 2-epimerase activity. As to expression, highest expression in liver and placenta. Also found in heart, brain, lung, kidney, skeletal muscle and pancreas. Isoform 1 is expressed in heart, brain, kidney, liver, placenta, lung, spleen, pancreas, skeletal muscle and colon. Isoform 2 is expressed mainly in placenta, but also in brain, kidney, liver, lung, pancreas and colon. Isoform 3 is expressed at low level in kidney, liver, placenta and colon.

It is found in the cytoplasm. The protein resides in the cytosol. The catalysed reaction is UDP-N-acetyl-alpha-D-glucosamine + H2O = aldehydo-N-acetyl-D-mannosamine + UDP + H(+). It carries out the reaction an N-acyl-D-mannosamine + ATP = an N-acyl-D-mannosamine 6-phosphate + ADP + H(+). The protein operates within amino-sugar metabolism; N-acetylneuraminate biosynthesis. With respect to regulation, the UDP-N-acetylglucosamine 2-epimerase activity, in contrast to the N-acetylmannosamine kinase activity, exhibits allosteric regulation by cytidine monophosphate-N-acetylneuraminic acid (CMP-Neu5Ac), the end product of neuraminic acid biosynthesis. Moreover, the activity is contingent upon the oligomeric state of the enzyme. The monomeric form is inactive, while the dimeric form selectively catalyzes the phosphorylation of N-acetylmannosamine. The hexameric form, on the other hand, demonstrates full proficiency in both enzyme activities. Furthermore, the UDP-N-acetylglucosamine 2-epimerase activity is increased by PKC-mediated phosphorylation. Functionally, bifunctional enzyme that possesses both UDP-N-acetylglucosamine 2-epimerase and N-acetylmannosamine kinase activities, and serves as the initiator of the biosynthetic pathway leading to the production of N-acetylneuraminic acid (NeuAc), a critical precursor in the synthesis of sialic acids. By catalyzing this pivotal and rate-limiting step in sialic acid biosynthesis, this enzyme assumes a pivotal role in governing the regulation of cell surface sialylation, playing a role in embryonic angiogenesis. Sialic acids represent a category of negatively charged sugars that reside on the surface of cells as terminal components of glycoconjugates and mediate important functions in various cellular processes, including cell adhesion, signal transduction, and cellular recognition. The polypeptide is Bifunctional UDP-N-acetylglucosamine 2-epimerase/N-acetylmannosamine kinase (Homo sapiens (Human)).